The sequence spans 550 residues: Hydroxylamine reductase (550 aa).

4 residues coordinate [2Fe-2S] cluster: Cys-4, Cys-7, Cys-19, and Cys-26. Residues His-249, Glu-273, Cys-317, Cys-405, Cys-433, Cys-458, Glu-492, and Lys-494 each contribute to the hybrid [4Fe-2O-2S] cluster site. Cysteine persulfide is present on Cys-405.

This sequence belongs to the HCP family. Requires [2Fe-2S] cluster as cofactor. It depends on hybrid [4Fe-2O-2S] cluster as a cofactor.

It localises to the cytoplasm. The catalysed reaction is A + NH4(+) + H2O = hydroxylamine + AH2 + H(+). In terms of biological role, catalyzes the reduction of hydroxylamine to form NH(3) and H(2)O. The protein is Hydroxylamine reductase of Aeromonas salmonicida (strain A449).